A 486-amino-acid polypeptide reads, in one-letter code: Maintenance of mitochondrial morphology protein 1 (486 aa).

At 1–23 (MSQHSQYDAPGVPVQPSLSFTQG) the chain is on the lumenal side. A helical membrane pass occupies residues 24–44 (FLLGQLSVVLLIGAFIKFFIF). The Cytoplasmic segment spans residues 45–486 (GEAPAPPSRG…PGSMPGGRAQ (442 aa)). Residues 52 to 103 (SRGLASRTASHHRSYSINQGDNNVSNNNTSGGSPRTLCEKPSTSNVLRPVPS) form a disordered region. A compositionally biased stretch (low complexity) spans 67–84 (SINQGDNNVSNNNTSGGS). Polar residues predominate over residues 92 to 103 (PSTSNVLRPVPS). In terms of domain architecture, SMP-LTD spans 140 to 389 (QPESLDWFNV…EPRVQVVGLP (250 aa)). Positions 413–426 (AAASASSRGGAPEA) are enriched in low complexity. The interval 413-486 (AAASASSRGG…PGSMPGGRAQ (74 aa)) is disordered.

Belongs to the MMM1 family. Homodimer. Component of the ER-mitochondria encounter structure (ERMES) or MDM complex, composed of mmm1, mdm10, mdm12 and mdm34. A mmm1 homodimer associates with one molecule of mdm12 on each side in a pairwise head-to-tail manner, and the SMP-LTD domains of mmm1 and mdm12 generate a continuous hydrophobic tunnel for phospholipid trafficking.

It is found in the endoplasmic reticulum membrane. In terms of biological role, component of the ERMES/MDM complex, which serves as a molecular tether to connect the endoplasmic reticulum (ER) and mitochondria. Components of this complex are involved in the control of mitochondrial shape and protein biogenesis, and function in nonvesicular lipid trafficking between the ER and mitochondria. The mdm12-mmm1 subcomplex functions in the major beta-barrel assembly pathway that is responsible for biogenesis of all outer membrane beta-barrel proteins, and acts in a late step after the SAM complex. The mdm10-mdm12-mmm1 subcomplex further acts in the TOM40-specific pathway after the action of the mdm12-mmm1 complex. Essential for establishing and maintaining the structure of mitochondria and maintenance of mtDNA nucleoids. The sequence is that of Maintenance of mitochondrial morphology protein 1 from Talaromyces marneffei (strain ATCC 18224 / CBS 334.59 / QM 7333) (Penicillium marneffei).